We begin with the raw amino-acid sequence, 261 residues long: Guanine nucleotide exchange factor BopE (261 aa).

The protein belongs to the GEF (guanine exchange factor) SopE family. Monomer. Interacts with human CDC42.

The protein localises to the secreted. Activator for both CDC42 and RAC1 by directly interacting with these Rho GTPases and acting as a guanine nucleotide exchange factor (GEF). This activation results in actin cytoskeleton rearrangements and stimulates membrane ruffling, thus promoting bacterial entry into non-phagocytic cells. The chain is Guanine nucleotide exchange factor BopE (bopE) from Burkholderia mallei (strain NCTC 10247).